The chain runs to 1257 residues: Period circadian protein homolog 2 (1257 aa).

Residues M1–G59 are disordered. The segment covering S8 to Q25 has biased composition (low complexity). Over residues S35 to S53 the composition is skewed to polar residues. The Nuclear export signal 1 motif lies at L109–V118. The PAS 1 domain maps to I179–L246. The LXXLL signature appears at L306–L310. The 67-residue stretch at Y319–Q385 folds into the PAS 2 domain. The PAC domain occupies Y393–P436. The Nuclear export signal 2 motif lies at L460–M469. The segment at P471 to K567 is disordered. Residues S478–S482 form an important for protein stability region. Polar residues-rich tracts occupy residues M493 to Q504 and S518 to S528. The tract at residues R510 to K709 is CSNK1E binding domain. Residues S525, S528, S531, S538, and S544 each carry the phosphoserine modification. The segment covering E541–T555 has biased composition (polar residues). T554 bears the Phosphothreonine mark. A phosphoserine mark is found at S659, S693, S697, S706, S758, and S763. Disordered stretches follow at residues D678–S706 and R757–A833. The short motif at K778–R794 is the Nuclear localization signal element. Positions K779 to K792 are enriched in basic residues. The span at S821–S832 shows a compositional bias: low complexity. T858 carries the post-translational modification Phosphothreonine. The segment at E882–L1067 is interaction with PPARG. S939 carries the post-translational modification Phosphoserine. T964 is modified (phosphothreonine). S971 carries the phosphoserine modification. Residues L983–L990 carry the Nuclear export signal 3 motif. Positions A993–I1044 are disordered. A compositionally biased stretch (low complexity) spans S996–L1014. Over residues S1033–I1044 the composition is skewed to polar residues. Residues L1051–L1055 carry the LXXLL motif. Over residues S1070–S1089 the composition is skewed to low complexity. Residues S1070 to I1108 are disordered. The span at R1090 to I1108 shows a compositional bias: polar residues. At S1126 the chain carries Phosphoserine. The tract at residues S1157–T1257 is CRY binding domain. The tract at residues E1226–T1257 is disordered.

In terms of assembly, homodimer. Component of the circadian core oscillator, which includes the CRY proteins, CLOCK or NPAS2, BMAL1 or BMAL2, CSNK1D and/or CSNK1E, TIMELESS, and the PER proteins. Interacts with CLOCK-BMAL1 (off DNA). Interacts directly with PER1 and PER3, and through a C-terminal domain, with CRY1 and CRY2. Interacts (via PAS 2 domain) with TIMELESS. Interacts with NFIL3. Different large complexes have been identified with different repressive functions. The core of PER complexes is composed of at least PER1, PER2, PER3, CRY1, CRY2, CSNK1D and/or CSNK1E. The large PER complex involved in the repression of transcriptional termination is composed of at least PER2, CDK9, DDX5, DHX9, NCBP1 and POLR2A (active). The large PER complex involved in the histone deacetylation is composed of at least HDAC1, PER2, SFPQ and SIN3A. The large PER complex involved in the histone methylation is composed of at least PER2, CBX3, TRIM28, SUV39H1 and/or SUV39H2; CBX3 mediates the formation of the complex. Interacts with SETX; the interaction inhibits termination of circadian target genes. Interacts with the nuclear receptors HNF4A, NR1D1, NR4A2, RORA, PPARA, PPARG and THRA; the interaction with at least PPARG is ligand dependent. Interacts with PML. Interacts (phosphorylated) with BTRC and FBXW11; the interactions trigger proteasomal degradation. Interacts with NONO and SFPQ. Interacts with CAVIN3. Interacts with MAGEL2. Interacts with MAP1LC3B. Interacts with HNF4A. Post-translationally, acetylated. Deacetylated by SIRT1, resulting in decreased protein stability. Deacetylated by SIRT6, preventing its degradation by the proteasome, resulting in increased protein stability. In terms of processing, phosphorylated by CSNK1E and CSNK1D. Phosphorylation results in PER2 protein degradation. May be dephosphorylated by PP1. Ubiquitinated, leading to its proteasomal degradation. Ubiquitination may be inhibited by CRY1. In terms of tissue distribution, expressed in all tissues examined including eye, brain, heart, lung, spleen, liver, pancreas and kidney. In the CNS, highly expressed in the SCN, internal granular layer of granular cells of the olfactory bulb, tuberculum olfactorium, piriform cortex, gyrus dentatus of the hippocampus, cerebellum, pars tuberalis/median eminence, and pituitary, and moderately in the tenia tecta, caudate putamen, accumbens nucleus, superior and inferior colliculus and pineal gland.

It localises to the nucleus. Its subcellular location is the cytoplasm. The protein localises to the perinuclear region. In terms of biological role, transcriptional repressor which forms a core component of the circadian clock. The circadian clock, an internal time-keeping system, regulates various physiological processes through the generation of approximately 24 hour circadian rhythms in gene expression, which are translated into rhythms in metabolism and behavior. It is derived from the Latin roots 'circa' (about) and 'diem' (day) and acts as an important regulator of a wide array of physiological functions including metabolism, sleep, body temperature, blood pressure, endocrine, immune, cardiovascular, and renal function. Consists of two major components: the central clock, residing in the suprachiasmatic nucleus (SCN) of the brain, and the peripheral clocks that are present in nearly every tissue and organ system. Both the central and peripheral clocks can be reset by environmental cues, also known as Zeitgebers (German for 'timegivers'). The predominant Zeitgeber for the central clock is light, which is sensed by retina and signals directly to the SCN. The central clock entrains the peripheral clocks through neuronal and hormonal signals, body temperature and feeding-related cues, aligning all clocks with the external light/dark cycle. Circadian rhythms allow an organism to achieve temporal homeostasis with its environment at the molecular level by regulating gene expression to create a peak of protein expression once every 24 hours to control when a particular physiological process is most active with respect to the solar day. Transcription and translation of core clock components (CLOCK, NPAS2, BMAL1, BMAL2, PER1, PER2, PER3, CRY1 and CRY2) plays a critical role in rhythm generation, whereas delays imposed by post-translational modifications (PTMs) are important for determining the period (tau) of the rhythms (tau refers to the period of a rhythm and is the length, in time, of one complete cycle). A diurnal rhythm is synchronized with the day/night cycle, while the ultradian and infradian rhythms have a period shorter and longer than 24 hours, respectively. Disruptions in the circadian rhythms contribute to the pathology of cardiovascular diseases, cancer, metabolic syndrome and aging. A transcription/translation feedback loop (TTFL) forms the core of the molecular circadian clock mechanism. Transcription factors, CLOCK or NPAS2 and BMAL1 or BMAL2, form the positive limb of the feedback loop, act in the form of a heterodimer and activate the transcription of core clock genes and clock-controlled genes (involved in key metabolic processes), harboring E-box elements (5'-CACGTG-3') within their promoters. The core clock genes: PER1/2/3 and CRY1/2 which are transcriptional repressors form the negative limb of the feedback loop and interact with the CLOCK|NPAS2-BMAL1|BMAL2 heterodimer inhibiting its activity and thereby negatively regulating their own expression. This heterodimer also activates nuclear receptors NR1D1/2 and RORA/B/G, which form a second feedback loop and which activate and repress BMAL1 transcription, respectively. PER1 and PER2 proteins transport CRY1 and CRY2 into the nucleus with appropriate circadian timing, but also contribute directly to repression of clock-controlled target genes through interaction with several classes of RNA-binding proteins, helicases and others transcriptional repressors. PER appears to regulate circadian control of transcription by at least three different modes. First, interacts directly with the CLOCK-BMAL1 at the tail end of the nascent transcript peak to recruit complexes containing the SIN3-HDAC that remodel chromatin to repress transcription. Second, brings H3K9 methyltransferases such as SUV39H1 and SUV39H2 to the E-box elements of the circadian target genes, like PER2 itself or PER1. The recruitment of each repressive modifier to the DNA seems to be very precisely temporally orchestrated by the large PER complex, the deacetylases acting before than the methyltransferases. Additionally, large PER complexes are also recruited to the target genes 3' termination site through interactions with RNA-binding proteins and helicases that may play a role in transcription termination to regulate transcription independently of CLOCK-BMAL1 interactions. Recruitment of large PER complexes to the elongating polymerase at PER and CRY termination sites inhibited SETX action, impeding RNA polymerase II release and thereby repressing transcriptional reinitiation. May propagate clock information to metabolic pathways via the interaction with nuclear receptors. Coactivator of PPARA and corepressor of NR1D1, binds rhythmically at the promoter of nuclear receptors target genes like BMAL1 or G6PC1. Directly and specifically represses PPARG proadipogenic activity by blocking PPARG recruitment to target promoters and thereby transcriptional activation. Required for fatty acid and lipid metabolism, is involved as well in the regulation of circulating insulin levels. Plays an important role in the maintenance of cardiovascular functions through the regulation of NO and vasodilatatory prostaglandins production in aortas. Controls circadian glutamate uptake in synaptic vesicles through the regulation of VGLUT1 expression. May also be involved in the regulation of inflammatory processes. Represses the CLOCK-BMAL1 induced transcription of BHLHE40/DEC1 and ATF4. Negatively regulates the formation of the TIMELESS-CRY1 complex by competing with TIMELESS for binding to CRY1. In Rattus norvegicus (Rat), this protein is Period circadian protein homolog 2.